The sequence spans 420 residues: Exodeoxyribonuclease 7 large subunit (420 aa).

The protein belongs to the XseA family. Heterooligomer composed of large and small subunits.

It is found in the cytoplasm. It catalyses the reaction Exonucleolytic cleavage in either 5'- to 3'- or 3'- to 5'-direction to yield nucleoside 5'-phosphates.. Functionally, bidirectionally degrades single-stranded DNA into large acid-insoluble oligonucleotides, which are then degraded further into small acid-soluble oligonucleotides. This is Exodeoxyribonuclease 7 large subunit from Helicobacter pylori (strain HPAG1).